The following is a 360-amino-acid chain: AA9 family lytic polysaccharide monooxygenase A (360 aa).

An N-terminal signal peptide occupies residues 1–19; sequence MKTSFGLLALAAAAKLVNA. Cu(2+)-binding residues include H20 and H102. C62 and C183 are oxidised to a cystine. H169 provides a ligand contact to O2. Y180 provides a ligand contact to Cu(2+). The tract at residues 254-293 is disordered; that stretch reads TSAASASSTKAPATTAAPVQTESAKPATSTTQAAAPTTLV. Residues 322 to 358 enclose the CBM1 domain; it reads GVVKMYAQCGGMNYSGSTTCESGLTCKQWNPYYHQCV. N334 is a glycosylation site (N-linked (GlcNAc...) asparagine).

It belongs to the polysaccharide monooxygenase AA9 family. Requires Cu(2+) as cofactor.

The protein localises to the secreted. It carries out the reaction [(1-&gt;4)-beta-D-glucosyl]n+m + reduced acceptor + O2 = 4-dehydro-beta-D-glucosyl-[(1-&gt;4)-beta-D-glucosyl]n-1 + [(1-&gt;4)-beta-D-glucosyl]m + acceptor + H2O.. Lytic polysaccharide monooxygenase (LPMO) that depolymerizes crystalline and amorphous polysaccharides via the oxidation of scissile alpha- or beta-(1-4)-glycosidic bonds, yielding C4 oxidation products. Catalysis by LPMOs requires the reduction of the active-site copper from Cu(II) to Cu(I) by a reducing agent and H(2)O(2) or O(2) as a cosubstrate. The chain is AA9 family lytic polysaccharide monooxygenase A (eglD) from Aspergillus terreus (strain NIH 2624 / FGSC A1156).